We begin with the raw amino-acid sequence, 262 residues long: Small ribosomal subunit protein eS1 (262 aa).

This sequence belongs to the eukaryotic ribosomal protein eS1 family. As to quaternary structure, component of the small ribosomal subunit. Mature ribosomes consist of a small (40S) and a large (60S) subunit. The 40S subunit contains about 33 different proteins and 1 molecule of RNA (18S). The 60S subunit contains about 49 different proteins and 3 molecules of RNA (25S, 5.8S and 5S).

It is found in the cytoplasm. This is Small ribosomal subunit protein eS1 from Plasmodium vivax (strain Salvador I).